A 714-amino-acid chain; its full sequence is Elongation factor G-like protein (714 aa).

One can recognise a tr-type G domain in the interval 21–289 (GGVRNVVLVG…VATRGFPSPM (269 aa)). The tract at residues 30 to 37 (GPSGGGKT) is G1. 30-37 (GPSGGGKT) contributes to the GTP binding site. The tract at residues 73-77 (QRSVG) is G2. Positions 94-97 (DTPG) are G3. GTP contacts are provided by residues 94–98 (DTPGY) and 148–151 (TKLD). Positions 148-151 (TKLD) are G4. The tract at residues 267–269 (CSS) is G5.

Belongs to the TRAFAC class translation factor GTPase superfamily. Classic translation factor GTPase family. EF-G/EF-2 subfamily.

The sequence is that of Elongation factor G-like protein from Mycobacterium tuberculosis (strain CDC 1551 / Oshkosh).